A 223-amino-acid chain; its full sequence is Cytidylate kinase (223 aa).

12–20 (GPSGVGKGT) provides a ligand contact to ATP.

Belongs to the cytidylate kinase family. Type 1 subfamily.

The protein resides in the cytoplasm. It catalyses the reaction CMP + ATP = CDP + ADP. It carries out the reaction dCMP + ATP = dCDP + ADP. The protein is Cytidylate kinase of Xylella fastidiosa (strain M12).